The chain runs to 520 residues: GMP synthase [glutamine-hydrolyzing] (520 aa).

Residues 12–205 (KIIVLDYGSQ…AISICGARGD (194 aa)) form the Glutamine amidotransferase type-1 domain. The Nucleophile role is filled by cysteine 89. Residues histidine 179 and glutamate 181 contribute to the active site. In terms of domain architecture, GMPS ATP-PPase spans 206–395 (WSMDNFIDME…LGMPEEIVWR (190 aa)). 233–239 (SGGVDSS) contributes to the ATP binding site.

Homodimer.

The enzyme catalyses XMP + L-glutamine + ATP + H2O = GMP + L-glutamate + AMP + diphosphate + 2 H(+). The protein operates within purine metabolism; GMP biosynthesis; GMP from XMP (L-Gln route): step 1/1. In terms of biological role, catalyzes the synthesis of GMP from XMP. The polypeptide is GMP synthase [glutamine-hydrolyzing] (Streptococcus pyogenes serotype M2 (strain MGAS10270)).